We begin with the raw amino-acid sequence, 101 residues long: Small ribosomal subunit protein uS10 (101 aa).

It belongs to the universal ribosomal protein uS10 family. In terms of assembly, part of the 30S ribosomal subunit.

Its function is as follows. Involved in the binding of tRNA to the ribosomes. This Christiangramia forsetii (strain DSM 17595 / CGMCC 1.15422 / KT0803) (Gramella forsetii) protein is Small ribosomal subunit protein uS10.